The primary structure comprises 427 residues: Phosphoribosylamine--glycine ligase (427 aa).

The ATP-grasp domain maps to Lys-107–Asp-312. Ile-133 to Ser-193 is an ATP binding site. Glu-282 and Asn-284 together coordinate Mg(2+).

It belongs to the GARS family. It depends on Mg(2+) as a cofactor. Mn(2+) is required as a cofactor.

It catalyses the reaction 5-phospho-beta-D-ribosylamine + glycine + ATP = N(1)-(5-phospho-beta-D-ribosyl)glycinamide + ADP + phosphate + H(+). It participates in purine metabolism; IMP biosynthesis via de novo pathway; N(1)-(5-phospho-D-ribosyl)glycinamide from 5-phospho-alpha-D-ribose 1-diphosphate: step 2/2. The protein is Phosphoribosylamine--glycine ligase of Brucella melitensis biotype 1 (strain ATCC 23456 / CCUG 17765 / NCTC 10094 / 16M).